The sequence spans 353 residues: ATP-dependent (S)-NAD(P)H-hydrate dehydratase (353 aa).

Residues 18-345 (MLARVRQMVP…DEVHTAFLNL (328 aa)) form the YjeF C-terminal domain. The segment at 95-121 (RSSPPALSSSDSGSSPSRTKSAPDTDP) is disordered. The span at 96-114 (SSPPALSSSDSGSSPSRTK) shows a compositional bias: low complexity. (6S)-NADPHX is bound by residues G143 and 196 to 202 (NVVEFGR). Residues 241 to 245 (KGAKD) and 260 to 269 (GGLKRSGGQG) contribute to the ATP site. Residue D270 coordinates (6S)-NADPHX.

The protein belongs to the NnrD/CARKD family. It depends on Mg(2+) as a cofactor.

It is found in the cytoplasm. It carries out the reaction (6S)-NADHX + ATP = ADP + phosphate + NADH + H(+). The catalysed reaction is (6S)-NADPHX + ATP = ADP + phosphate + NADPH + H(+). In terms of biological role, catalyzes the dehydration of the S-form of NAD(P)HX at the expense of ATP, which is converted to ADP. Together with NAD(P)HX epimerase, which catalyzes the epimerization of the S- and R-forms, the enzyme allows the repair of both epimers of NAD(P)HX, a damaged form of NAD(P)H that is a result of enzymatic or heat-dependent hydration. This Neurospora crassa (strain ATCC 24698 / 74-OR23-1A / CBS 708.71 / DSM 1257 / FGSC 987) protein is ATP-dependent (S)-NAD(P)H-hydrate dehydratase.